A 213-amino-acid polypeptide reads, in one-letter code: Glycerol-3-phosphate acyltransferase (213 aa).

6 consecutive transmembrane segments (helical) span residues Ile-2–Ile-22, Ala-52–Phe-74, Pro-81–Phe-100, Val-112–Leu-132, Val-143–Leu-163, and Ser-164–Arg-184.

It belongs to the PlsY family. Probably interacts with PlsX.

Its subcellular location is the cell membrane. The enzyme catalyses an acyl phosphate + sn-glycerol 3-phosphate = a 1-acyl-sn-glycero-3-phosphate + phosphate. The protein operates within lipid metabolism; phospholipid metabolism. Its function is as follows. Catalyzes the transfer of an acyl group from acyl-phosphate (acyl-PO(4)) to glycerol-3-phosphate (G3P) to form lysophosphatidic acid (LPA). This enzyme utilizes acyl-phosphate as fatty acyl donor, but not acyl-CoA or acyl-ACP. This Streptococcus pneumoniae (strain CGSP14) protein is Glycerol-3-phosphate acyltransferase.